We begin with the raw amino-acid sequence, 142 residues long: Transcriptional regulator MraZ (142 aa).

2 SpoVT-AbrB domains span residues 5–47 (EYNH…PMEE) and 76–119 (ANEI…SREK).

Belongs to the MraZ family. As to quaternary structure, forms oligomers.

Its subcellular location is the cytoplasm. It localises to the nucleoid. This chain is Transcriptional regulator MraZ, found in Clostridium tetani (strain Massachusetts / E88).